The primary structure comprises 212 residues: Putative inactive 6-phospho-alpha-glucosidase (212 aa).

4–70 (FSVVVAGGGS…PDIAFSYTTD (67 aa)) contacts NAD(+). Mn(2+) contacts are provided by Cys-169 and His-200.

Belongs to the glycosyl hydrolase 4 family.

The protein is Putative inactive 6-phospho-alpha-glucosidase of Escherichia coli (strain K12).